The chain runs to 41 residues: MKVVSSLKSLKKRDKDCQIVKRRGKIFVINKKNKRFKAKQG.

It belongs to the bacterial ribosomal protein bL36 family.

This is Large ribosomal subunit protein bL36 from Rickettsia africae (strain ESF-5).